The chain runs to 330 residues: D-lactate dehydrogenase (330 aa).

NAD(+) contacts are provided by residues 156 to 157, D176, 206 to 207, 233 to 235, and D259; these read RI, VP, and AAR. The active site involves R235. E264 is a catalytic residue. Catalysis depends on H296, which acts as the Proton donor.

Belongs to the D-isomer specific 2-hydroxyacid dehydrogenase family.

It catalyses the reaction (R)-lactate + NAD(+) = pyruvate + NADH + H(+). The protein is D-lactate dehydrogenase (ldhD) of Staphylococcus aureus.